The sequence spans 101 residues: Apolipoprotein C-II (101 aa).

The signal sequence occupies residues 1–22 (MGIRYLLVLVLVLLVLGCEVQG). A lipid binding region spans residues 66 to 74 (TMDEKIREI). The tract at residues 78-101 (STAAVSTYAGIFTDQLLSMLKGDQ) is lipoprotein lipase cofactor.

This sequence belongs to the apolipoprotein C2 family. In terms of processing, proapolipoprotein C-II is synthesized as a sialic acid containing glycoprotein which is subsequently desialylated prior to its proteolytic processing. Post-translationally, proapolipoprotein C-II, the major form found in plasma undergoes proteolytic cleavage of its N-terminal hexapeptide to generate apolipoprotein C-II, which occurs as the minor form in plasma.

It is found in the secreted. Its function is as follows. Component of chylomicrons, very low-density lipoproteins (VLDL), low-density lipoproteins (LDL), and high-density lipoproteins (HDL) in plasma. Plays an important role in lipoprotein metabolism as an activator of lipoprotein lipase. Both proapolipoprotein C-II and apolipoprotein C-II can activate lipoprotein lipase. The chain is Apolipoprotein C-II (APOC2) from Phoca vitulina (Harbor seal).